We begin with the raw amino-acid sequence, 312 residues long: Glyoxylate/hydroxypyruvate reductase A (312 aa).

R227 is an active-site residue. The active-site Proton donor is H275.

The protein belongs to the D-isomer specific 2-hydroxyacid dehydrogenase family. GhrA subfamily.

The protein resides in the cytoplasm. It catalyses the reaction glycolate + NADP(+) = glyoxylate + NADPH + H(+). The catalysed reaction is (R)-glycerate + NAD(+) = 3-hydroxypyruvate + NADH + H(+). The enzyme catalyses (R)-glycerate + NADP(+) = 3-hydroxypyruvate + NADPH + H(+). Its function is as follows. Catalyzes the NADPH-dependent reduction of glyoxylate and hydroxypyruvate into glycolate and glycerate, respectively. This chain is Glyoxylate/hydroxypyruvate reductase A, found in Escherichia coli O7:K1 (strain IAI39 / ExPEC).